Here is an 831-residue protein sequence, read N- to C-terminus: Pleckstrin homology-like domain family B member 1 (831 aa).

Residues 1–11 (LTLGARGRRTR) are compositionally biased toward basic residues. The segment at 1 to 73 (LTLGARGRRT…PIPRERKNSI (73 aa)) is disordered. Arginine 6 carries the post-translational modification Omega-N-methylarginine. Serine 12 and serine 14 each carry phosphoserine. Threonine 16 bears the Phosphothreonine mark. Phosphoserine occurs at positions 27, 33, 45, 49, 57, 72, 77, and 175. Residues 39–51 (GSLTGASPRQSPH) are compositionally biased toward polar residues. 2 disordered regions span residues 160 to 209 (RSGE…LQGE) and 416 to 465 (NGDM…QNGT). The span at 174–188 (ESMERSDEENLKEEC) shows a compositional bias: basic and acidic residues. Residues 180–306 (DEENLKEECS…TETKLFEDLE (127 aa)) are a coiled coil. Phosphoserine occurs at positions 421 and 467. Low complexity predominate over residues 421-442 (SPLPRTRSGPLPSSSGSSSSSS). Residues 584 to 603 (SMETSISTGGNSACSPDNMS) are disordered. Residues 610-676 (MGKIEEMEKM…QQLVEKEVKL (67 aa)) adopt a coiled-coil conformation. The PH domain maps to 721–824 (SKVCRGYLIK…WMDVIVTGAE (104 aa)).

The protein is Pleckstrin homology-like domain family B member 1 (Phldb1) of Rattus norvegicus (Rat).